Here is a 1215-residue protein sequence, read N- to C-terminus: DNA-directed RNA polymerase subunit beta' (1215 aa).

Residues cysteine 60, cysteine 62, cysteine 75, and cysteine 78 each contribute to the Zn(2+) site. Aspartate 450, aspartate 452, and aspartate 454 together coordinate Mg(2+). Cysteine 818, cysteine 892, cysteine 899, and cysteine 902 together coordinate Zn(2+).

Belongs to the RNA polymerase beta' chain family. The RNAP catalytic core consists of 2 alpha, 1 beta, 1 beta' and 1 omega subunit. When a sigma factor is associated with the core the holoenzyme is formed, which can initiate transcription. Mg(2+) serves as cofactor. The cofactor is Zn(2+).

The enzyme catalyses RNA(n) + a ribonucleoside 5'-triphosphate = RNA(n+1) + diphosphate. Functionally, DNA-dependent RNA polymerase catalyzes the transcription of DNA into RNA using the four ribonucleoside triphosphates as substrates. The sequence is that of DNA-directed RNA polymerase subunit beta' from Streptococcus sanguinis (strain SK36).